We begin with the raw amino-acid sequence, 681 residues long: DNA-directed RNA polymerase subunit beta' (681 aa).

Zn(2+) is bound by residues cysteine 69, cysteine 71, cysteine 87, and cysteine 90. Residues aspartate 489, aspartate 491, and aspartate 493 each contribute to the Mg(2+) site.

It belongs to the RNA polymerase beta' chain family. RpoC1 subfamily. In plastids the minimal PEP RNA polymerase catalytic core is composed of four subunits: alpha, beta, beta', and beta''. When a (nuclear-encoded) sigma factor is associated with the core the holoenzyme is formed, which can initiate transcription. The cofactor is Mg(2+). Requires Zn(2+) as cofactor.

Its subcellular location is the plastid. It localises to the chloroplast. It carries out the reaction RNA(n) + a ribonucleoside 5'-triphosphate = RNA(n+1) + diphosphate. Its function is as follows. DNA-dependent RNA polymerase catalyzes the transcription of DNA into RNA using the four ribonucleoside triphosphates as substrates. The polypeptide is DNA-directed RNA polymerase subunit beta' (Solanum bulbocastanum (Wild potato)).